The primary structure comprises 451 residues: Chromosomal replication initiator protein DnaA (451 aa).

The tract at residues 1-72 is domain I, interacts with DnaA modulators; that stretch reads MSLPTSLWDK…TELLDELSDT (72 aa). The tract at residues 72–114 is domain II; the sequence is TPPQIRLQIGSRSTEMPTKNSHEPSHRKAAAPPAGTTISHTQA. Positions 81–90 are enriched in polar residues; it reads GSRSTEMPTK. The disordered stretch occupies residues 81 to 106; the sequence is GSRSTEMPTKNSHEPSHRKAAAPPAG. Residues 115 to 331 form a domain III, AAA+ region region; the sequence is NINSNFTFDS…GALKRVIANA (217 aa). Glycine 159, glycine 161, lysine 162, and threonine 163 together coordinate ATP. The interval 332 to 451 is domain IV, binds dsDNA; the sequence is HFTGQSITVD…YKNLMRILSG (120 aa).

Belongs to the DnaA family. In terms of assembly, oligomerizes as a right-handed, spiral filament on DNA at oriC.

Its subcellular location is the cytoplasm. Plays an essential role in the initiation and regulation of chromosomal replication. ATP-DnaA binds to the origin of replication (oriC) to initiate formation of the DNA replication initiation complex once per cell cycle. Binds the DnaA box (a 9 base pair repeat at the origin) and separates the double-stranded (ds)DNA. Forms a right-handed helical filament on oriC DNA; dsDNA binds to the exterior of the filament while single-stranded (ss)DNA is stabiized in the filament's interior. The ATP-DnaA-oriC complex binds and stabilizes one strand of the AT-rich DNA unwinding element (DUE), permitting loading of DNA polymerase. After initiation quickly degrades to an ADP-DnaA complex that is not apt for DNA replication. Binds acidic phospholipids. This chain is Chromosomal replication initiator protein DnaA, found in Coxiella burnetii (strain CbuK_Q154) (Coxiella burnetii (strain Q154)).